The following is a 413-amino-acid chain: Serine hydroxymethyltransferase (413 aa).

Residues leucine 119 and 123–125 (GHL) each bind (6S)-5,6,7,8-tetrahydrofolate. Lysine 228 carries the N6-(pyridoxal phosphate)lysine modification. Residue 351–353 (SPF) participates in (6S)-5,6,7,8-tetrahydrofolate binding.

The protein belongs to the SHMT family. As to quaternary structure, homodimer. Requires pyridoxal 5'-phosphate as cofactor.

It localises to the cytoplasm. The catalysed reaction is (6R)-5,10-methylene-5,6,7,8-tetrahydrofolate + glycine + H2O = (6S)-5,6,7,8-tetrahydrofolate + L-serine. Its pathway is one-carbon metabolism; tetrahydrofolate interconversion. It functions in the pathway amino-acid biosynthesis; glycine biosynthesis; glycine from L-serine: step 1/1. In terms of biological role, catalyzes the reversible interconversion of serine and glycine with tetrahydrofolate (THF) serving as the one-carbon carrier. This reaction serves as the major source of one-carbon groups required for the biosynthesis of purines, thymidylate, methionine, and other important biomolecules. Also exhibits THF-independent aldolase activity toward beta-hydroxyamino acids, producing glycine and aldehydes, via a retro-aldol mechanism. The polypeptide is Serine hydroxymethyltransferase (Clostridium botulinum (strain ATCC 19397 / Type A)).